The following is a 215-amino-acid chain: UPF0502 protein YceH (215 aa).

The protein belongs to the UPF0502 family.

This is UPF0502 protein YceH from Salmonella paratyphi C (strain RKS4594).